Here is a 202-residue protein sequence, read N- to C-terminus: Holliday junction branch migration complex subunit RuvA (202 aa).

The interval Met-1–Ala-64 is domain I. The tract at residues Ser-65–Ala-143 is domain II. The interval Leu-144 to Pro-154 is flexible linker. The domain III stretch occupies residues Pro-154–Ile-202.

It belongs to the RuvA family. In terms of assembly, homotetramer. Forms an RuvA(8)-RuvB(12)-Holliday junction (HJ) complex. HJ DNA is sandwiched between 2 RuvA tetramers; dsDNA enters through RuvA and exits via RuvB. An RuvB hexamer assembles on each DNA strand where it exits the tetramer. Each RuvB hexamer is contacted by two RuvA subunits (via domain III) on 2 adjacent RuvB subunits; this complex drives branch migration. In the full resolvosome a probable DNA-RuvA(4)-RuvB(12)-RuvC(2) complex forms which resolves the HJ.

It localises to the cytoplasm. The RuvA-RuvB-RuvC complex processes Holliday junction (HJ) DNA during genetic recombination and DNA repair, while the RuvA-RuvB complex plays an important role in the rescue of blocked DNA replication forks via replication fork reversal (RFR). RuvA specifically binds to HJ cruciform DNA, conferring on it an open structure. The RuvB hexamer acts as an ATP-dependent pump, pulling dsDNA into and through the RuvAB complex. HJ branch migration allows RuvC to scan DNA until it finds its consensus sequence, where it cleaves and resolves the cruciform DNA. The sequence is that of Holliday junction branch migration complex subunit RuvA from Pseudomonas fluorescens (strain ATCC BAA-477 / NRRL B-23932 / Pf-5).